Consider the following 352-residue polypeptide: tRNA-specific 2-thiouridylase MnmA (352 aa).

ATP contacts are provided by residues 11-18 (AMSGGVDS) and Met37. The active-site Nucleophile is the Cys101. Cysteines 101 and 197 form a disulfide. An ATP-binding site is contributed by Gly125. The interaction with tRNA stretch occupies residues 147 to 149 (KDQ). The active-site Cysteine persulfide intermediate is Cys197. Positions 302–303 (RY) are interaction with tRNA.

The protein belongs to the MnmA/TRMU family.

The protein localises to the cytoplasm. It carries out the reaction S-sulfanyl-L-cysteinyl-[protein] + uridine(34) in tRNA + AH2 + ATP = 2-thiouridine(34) in tRNA + L-cysteinyl-[protein] + A + AMP + diphosphate + H(+). Functionally, catalyzes the 2-thiolation of uridine at the wobble position (U34) of tRNA, leading to the formation of s(2)U34. The protein is tRNA-specific 2-thiouridylase MnmA of Syntrophotalea carbinolica (strain DSM 2380 / NBRC 103641 / GraBd1) (Pelobacter carbinolicus).